The chain runs to 342 residues: S-adenosylmethionine:tRNA ribosyltransferase-isomerase (342 aa).

It belongs to the QueA family. As to quaternary structure, monomer.

The protein localises to the cytoplasm. It catalyses the reaction 7-aminomethyl-7-carbaguanosine(34) in tRNA + S-adenosyl-L-methionine = epoxyqueuosine(34) in tRNA + adenine + L-methionine + 2 H(+). The protein operates within tRNA modification; tRNA-queuosine biosynthesis. Functionally, transfers and isomerizes the ribose moiety from AdoMet to the 7-aminomethyl group of 7-deazaguanine (preQ1-tRNA) to give epoxyqueuosine (oQ-tRNA). This Streptococcus agalactiae serotype III (strain NEM316) protein is S-adenosylmethionine:tRNA ribosyltransferase-isomerase.